A 437-amino-acid chain; its full sequence is UPF0597 protein Shal_0864 (437 aa).

Belongs to the UPF0597 family.

The protein is UPF0597 protein Shal_0864 of Shewanella halifaxensis (strain HAW-EB4).